Reading from the N-terminus, the 302-residue chain is Olfactory receptor 51H1 (302 aa).

The Extracellular portion of the chain corresponds to 1–27; that stretch reads MTNLNASQANHRNFILTGIPGTPDKNP. A glycan (N-linked (GlcNAc...) asparagine) is linked at Asn5. The helical transmembrane segment at 28-48 threads the bilayer; it reads WLAFPLGFLYTLTLLGNGTIL. Residues 49-56 lie on the Cytoplasmic side of the membrane; it reads AVIKVEPS. The helical transmembrane segment at 57–77 threads the bilayer; it reads LHEPTYYFLSILALTDVSLSM. Residues 78 to 101 lie on the Extracellular side of the membrane; it reads STLPSMLSIYWFNAPQIVFDACIM. A disulfide bond links Cys99 and Cys191. A helical transmembrane segment spans residues 102–122; sequence QMFFIHVFGIVESGVLVSMAF. The Cytoplasmic portion of the chain corresponds to 123 to 141; the sequence is DRFVAIRNPLHYVSILTHD. The chain crosses the membrane as a helical span at residues 142 to 162; it reads VIRKTGIAVLTRAVCVVFPVP. The Extracellular portion of the chain corresponds to 163–198; the sequence is FLIKCLPFCHSNVLSHSYCLHQNMMRLACASTRINS. The chain crosses the membrane as a helical span at residues 199–219; sequence LYGLIVVIFTLGLDVLLTLLS. The Cytoplasmic portion of the chain corresponds to 220–239; it reads YVLTLKTVLGIVSRGERLKT. Residues 240 to 260 traverse the membrane as a helical segment; the sequence is LSTCLSHMSTVLLFYVPFMGA. Residues 261-276 are Extracellular-facing; sequence ASMIHRFWEHLSPVVH. Residues 277-297 traverse the membrane as a helical segment; sequence MVMADIYLLLPPVLNPIVYSV. At 298–302 the chain is on the cytoplasmic side; the sequence is KTKQI.

This sequence belongs to the G-protein coupled receptor 1 family.

The protein localises to the cell membrane. Odorant receptor. The sequence is that of Olfactory receptor 51H1 (OR51H1) from Homo sapiens (Human).